A 415-amino-acid chain; its full sequence is Serine hydroxymethyltransferase (415 aa).

(6S)-5,6,7,8-tetrahydrofolate is bound by residues leucine 121 and 125–127 (GHL). Lysine 229 is subject to N6-(pyridoxal phosphate)lysine. A (6S)-5,6,7,8-tetrahydrofolate-binding site is contributed by 352–354 (SPF).

It belongs to the SHMT family. Homodimer. Pyridoxal 5'-phosphate is required as a cofactor.

It localises to the cytoplasm. It catalyses the reaction (6R)-5,10-methylene-5,6,7,8-tetrahydrofolate + glycine + H2O = (6S)-5,6,7,8-tetrahydrofolate + L-serine. It functions in the pathway one-carbon metabolism; tetrahydrofolate interconversion. The protein operates within amino-acid biosynthesis; glycine biosynthesis; glycine from L-serine: step 1/1. In terms of biological role, catalyzes the reversible interconversion of serine and glycine with tetrahydrofolate (THF) serving as the one-carbon carrier. This reaction serves as the major source of one-carbon groups required for the biosynthesis of purines, thymidylate, methionine, and other important biomolecules. Also exhibits THF-independent aldolase activity toward beta-hydroxyamino acids, producing glycine and aldehydes, via a retro-aldol mechanism. This Methylobacillus flagellatus (strain ATCC 51484 / DSM 6875 / VKM B-1610 / KT) protein is Serine hydroxymethyltransferase.